A 320-amino-acid chain; its full sequence is Aspartate carbamoyltransferase catalytic subunit (320 aa).

Carbamoyl phosphate contacts are provided by Arg-58 and Thr-59. Residue Lys-86 coordinates L-aspartate. 3 residues coordinate carbamoyl phosphate: Arg-108, His-136, and Gln-139. 2 residues coordinate L-aspartate: Arg-169 and Arg-223. Residues Gly-264 and Pro-265 each coordinate carbamoyl phosphate.

The protein belongs to the aspartate/ornithine carbamoyltransferase superfamily. ATCase family. As to quaternary structure, heterododecamer (2C3:3R2) of six catalytic PyrB chains organized as two trimers (C3), and six regulatory PyrI chains organized as three dimers (R2).

The enzyme catalyses carbamoyl phosphate + L-aspartate = N-carbamoyl-L-aspartate + phosphate + H(+). It functions in the pathway pyrimidine metabolism; UMP biosynthesis via de novo pathway; (S)-dihydroorotate from bicarbonate: step 2/3. Catalyzes the condensation of carbamoyl phosphate and aspartate to form carbamoyl aspartate and inorganic phosphate, the committed step in the de novo pyrimidine nucleotide biosynthesis pathway. This Cereibacter sphaeroides (strain ATCC 17025 / ATH 2.4.3) (Rhodobacter sphaeroides) protein is Aspartate carbamoyltransferase catalytic subunit.